The primary structure comprises 414 residues: Transforming growth factor beta-2 proprotein (414 aa).

Positions 1–20 are cleaved as a signal peptide; the sequence is MHYCVLSAFLLLHLVTVALS. N-linked (GlcNAc...) asparagine glycosylation is found at Asn72, Asn140, and Asn241. Intrachain disulfides connect Cys309–Cys318, Cys317–Cys380, Cys346–Cys411, and Cys350–Cys413.

This sequence belongs to the TGF-beta family. In terms of assembly, interacts with the serine proteases, HTRA1 and HTRA3. Interacts with ASPN. Interacts with MFAP5. Interacts with Transforming growth factor beta-2 (TGF-beta-2) chain; interaction is non-covalent and maintains (TGF-beta-2) in a latent state. Interacts with LRRC32/GARP; leading to regulate activation of TGF-beta-2. Interacts with NREP; the interaction results in a decrease in TGFB2 autoinduction. As to quaternary structure, transforming growth factor beta-2: Homodimer; disulfide-linked. Transforming growth factor beta-2: Interacts with TGF-beta receptors (TGFBR1 and TGFBR2), leading to signal transduction. In terms of processing, the precursor proprotein is cleaved in the Golgi apparatus to form Transforming growth factor beta-2 (TGF-beta-2) and Latency-associated peptide (LAP) chains, which remain non-covalently linked, rendering TGF-beta-2 inactive.

Its subcellular location is the secreted. It is found in the extracellular space. The protein resides in the extracellular matrix. Its function is as follows. Precursor of the Latency-associated peptide (LAP) and Transforming growth factor beta-2 (TGF-beta-2) chains, which constitute the regulatory and active subunit of TGF-beta-2, respectively. In terms of biological role, required to maintain the Transforming growth factor beta-2 (TGF-beta-2) chain in a latent state during storage in extracellular matrix. Associates non-covalently with TGF-beta-2 and regulates its activation via interaction with 'milieu molecules', such as LTBP1 and LRRC32/GARP, that control activation of TGF-beta-2. Functionally, multifunctional protein that regulates various processes such as angiogenesis and heart development. Activation into mature form follows different steps: following cleavage of the proprotein in the Golgi apparatus, Latency-associated peptide (LAP) and Transforming growth factor beta-2 (TGF-beta-2) chains remain non-covalently linked rendering TGF-beta-2 inactive during storage in extracellular matrix. At the same time, LAP chain interacts with 'milieu molecules', such as LTBP1 and LRRC32/GARP, that control activation of TGF-beta-2 and maintain it in a latent state during storage in extracellular milieus. Once activated following release of LAP, TGF-beta-2 acts by binding to TGF-beta receptors (TGFBR1 and TGFBR2), which transduce signal. In Bos taurus (Bovine), this protein is Transforming growth factor beta-2 proprotein (TGFB2).